Consider the following 284-residue polypeptide: Cell wall mannoprotein 1 (284 aa).

A signal peptide spans 1–17 (MRFSALLVTLGLTGALA). Low complexity predominate over residues 176–234 (SSTGTASSSAPATETATATETSTATGTVTETATSTPVIPTGTASGSASATPSTTATPTT). A disordered region spans residues 176 to 252 (SSTGTASSSA…SSTGTATAST (77 aa)).

The protein belongs to the cell wall mannoprotein 1 family. Galactomannoprotein, glycosylated.

Its subcellular location is the secreted. The protein resides in the cell wall. Its function is as follows. Constitutive protein of the cell wall. Antigen target of host humoral immune response. The sequence is that of Cell wall mannoprotein 1 from Aspergillus fumigatus (Neosartorya fumigata).